The chain runs to 172 residues: S-ribosylhomocysteine lyase (172 aa).

Positions 54, 58, and 128 each coordinate Fe cation.

The protein belongs to the LuxS family. In terms of assembly, homodimer. The cofactor is Fe cation.

The enzyme catalyses S-(5-deoxy-D-ribos-5-yl)-L-homocysteine = (S)-4,5-dihydroxypentane-2,3-dione + L-homocysteine. Its function is as follows. Involved in the synthesis of autoinducer 2 (AI-2) which is secreted by bacteria and is used to communicate both the cell density and the metabolic potential of the environment. The regulation of gene expression in response to changes in cell density is called quorum sensing. Catalyzes the transformation of S-ribosylhomocysteine (RHC) to homocysteine (HC) and 4,5-dihydroxy-2,3-pentadione (DPD). In Vibrio atlanticus (strain LGP32) (Vibrio splendidus (strain Mel32)), this protein is S-ribosylhomocysteine lyase.